The chain runs to 248 residues: MKSILNDFLLMIQFFTRIPINKNLQCEKVNFRRGAFFLPVVAFIIGGMEFLIYLGLKNFLPANVIIVLLILFTAMVTGGLHMDGLADTCDGFFSLRDKERIIEIMKDSRIGSYGTIALIIDLLLKYQLLYSLVLKGYSIAIVLAPIIGRISILFLCLSKRTAKKNGSGNIFIGNMSKPIVFFITTIILALSTYFLGLRATIIPFIGALLITYLLYLLCLNKINGLTGDTLGACNELGEITFLLILLMM.

The next 6 helical transmembrane spans lie at 36–56 (FFLP…YLGL), 59–79 (FLPA…VTGG), 114–134 (GTIA…SLVL), 137–157 (YSIA…FLCL), 170–190 (IFIG…ILAL), and 199–219 (ATII…LLCL).

Belongs to the CobS family. Mg(2+) serves as cofactor.

The protein localises to the cell membrane. It catalyses the reaction alpha-ribazole + adenosylcob(III)inamide-GDP = adenosylcob(III)alamin + GMP + H(+). It carries out the reaction alpha-ribazole 5'-phosphate + adenosylcob(III)inamide-GDP = adenosylcob(III)alamin 5'-phosphate + GMP + H(+). The protein operates within cofactor biosynthesis; adenosylcobalamin biosynthesis; adenosylcobalamin from cob(II)yrinate a,c-diamide: step 7/7. Functionally, joins adenosylcobinamide-GDP and alpha-ribazole to generate adenosylcobalamin (Ado-cobalamin). Also synthesizes adenosylcobalamin 5'-phosphate from adenosylcobinamide-GDP and alpha-ribazole 5'-phosphate. This is Adenosylcobinamide-GDP ribazoletransferase from Clostridium botulinum (strain Kyoto / Type A2).